Consider the following 124-residue polypeptide: NADH-quinone oxidoreductase subunit A (124 aa).

3 consecutive transmembrane segments (helical) span residues 11–31 (YLPI…IMIL), 68–88 (LVAI…PWAI), and 93–113 (IGKI…IGFV).

It belongs to the complex I subunit 3 family. NDH-1 is composed of 14 different subunits. Subunits NuoA, H, J, K, L, M, N constitute the membrane sector of the complex.

Its subcellular location is the cell inner membrane. It catalyses the reaction a quinone + NADH + 5 H(+)(in) = a quinol + NAD(+) + 4 H(+)(out). Functionally, NDH-1 shuttles electrons from NADH, via FMN and iron-sulfur (Fe-S) centers, to quinones in the respiratory chain. The immediate electron acceptor for the enzyme in this species is believed to be ubiquinone. Couples the redox reaction to proton translocation (for every two electrons transferred, four hydrogen ions are translocated across the cytoplasmic membrane), and thus conserves the redox energy in a proton gradient. This Rickettsia bellii (strain RML369-C) protein is NADH-quinone oxidoreductase subunit A.